The sequence spans 341 residues: HTH-type transcriptional repressor PurR (341 aa).

The region spanning 2–56 is the HTH lacI-type domain; that stretch reads ATIKDVAKRANVSTTTVSHVINKTRFVAEETRNAVWAAIKELHYSPSAVARSLKV. Residues 4–23 constitute a DNA-binding region (H-T-H motif); that stretch reads IKDVAKRANVSTTTVSHVIN. The DNA-binding element occupies 48–56; sequence SAVARSLKV. Residues Tyr73, Arg190, Thr192, Phe221, and Asp275 each coordinate hypoxanthine.

As to quaternary structure, homodimer.

The protein operates within purine metabolism; purine nucleotide biosynthesis [regulation]. Functionally, is the main repressor of the genes involved in the de novo synthesis of purine nucleotides, regulating purB, purC, purEK, purF, purHD, purL, purMN and guaBA expression. PurR is allosterically activated to bind its cognate DNA by binding the purine corepressors, hypoxanthine or guanine, thereby effecting transcription repression. This Shigella dysenteriae serotype 1 (strain Sd197) protein is HTH-type transcriptional repressor PurR.